The primary structure comprises 1567 residues: ABC multidrug transporter MDR1 (1567 aa).

Residues 1-11 (MASQPPQPPSG) show a composition bias toward pro residues. The tract at residues 1 to 37 (MASQPPQPPSGQPDTQYEEYQSEVITETTNRPTPAAD) is disordered. The segment covering 22–32 (SEVITETTNRP) has biased composition (polar residues). 3 N-linked (GlcNAc...) asparagine glycosylation sites follow: N149, N157, and N356. In terms of domain architecture, ABC transporter 1 spans 167–432 (VQYQDTFLSP…FEEMGWYCPP (266 aa)). 6 consecutive transmembrane segments (helical) span residues 543 to 563 (STIA…SLFF), 571 to 591 (GFFA…LMSI), 636 to 656 (IPIK…LGGL), 661 to 681 (AKFF…SAIF), 691 to 711 (IPQA…YTGF), and 798 to 818 (LGIL…VSEL). Residues N819, N895, and N912 are each glycosylated (N-linked (GlcNAc...) asparagine). Residues 891-1134 (FTWRNVTYDI…LLNYFETHGA (244 aa)) form the ABC transporter 2 domain. 927–934 (GVSGAGKT) contacts ATP. The disordered stretch occupies residues 1172–1202 (ESRHVQQELDRIQSETSKRNEGHGQSAEKEP). The helical transmembrane segment at 1231–1251 (IWGKLLLGLTSALFIGFSFFL) threads the bilayer. N1253 is a glycosylation site (N-linked (GlcNAc...) asparagine). Transmembrane regions (helical) follow at residues 1257–1277 (AGLQ…SSLV), 1305–1325 (VFLL…GIIA), 1345–1365 (ILLL…QMII), 1372–1392 (ETAG…NGVL), and 1498–1518 (GIGW…YYLI).

The protein belongs to the ABC transporter superfamily. ABCG family. PDR (TC 3.A.1.205) subfamily.

Its subcellular location is the cell membrane. It catalyses the reaction voriconazole(in) + ATP + H2O = voriconazole(out) + ADP + phosphate + H(+). The enzyme catalyses fluconazole(in) + ATP + H2O = fluconazole(out) + ADP + phosphate + H(+). It carries out the reaction (R)-miconazole(in) + ATP + H2O = (R)-miconazole(out) + ADP + phosphate + H(+). The catalysed reaction is (S)-miconazole(in) + ATP + H2O = (S)-miconazole(out) + ADP + phosphate + H(+). Pleiotropic ABC efflux transporter that may be involved in the modulation susceptibility to a wide range of unrelated cytotoxic compounds. This is ABC multidrug transporter MDR1 from Trichophyton tonsurans (strain CBS 112818) (Scalp ringworm fungus).